A 105-amino-acid chain; its full sequence is Nucleoid-associated protein ABC0038 (105 aa).

Positions 1-22 are enriched in low complexity; that stretch reads MEMKNMGNMMKQMQKMQKQMMK. The tract at residues 1 to 26 is disordered; that stretch reads MEMKNMGNMMKQMQKMQKQMMKAQEE.

It belongs to the YbaB/EbfC family. In terms of assembly, homodimer.

The protein localises to the cytoplasm. The protein resides in the nucleoid. Binds to DNA and alters its conformation. May be involved in regulation of gene expression, nucleoid organization and DNA protection. The chain is Nucleoid-associated protein ABC0038 from Shouchella clausii (strain KSM-K16) (Alkalihalobacillus clausii).